The chain runs to 336 residues: Aspartate--ammonia ligase (336 aa).

This sequence belongs to the class-II aminoacyl-tRNA synthetase family. AsnA subfamily.

The protein resides in the cytoplasm. It catalyses the reaction L-aspartate + NH4(+) + ATP = L-asparagine + AMP + diphosphate + H(+). It participates in amino-acid biosynthesis; L-asparagine biosynthesis; L-asparagine from L-aspartate (ammonia route): step 1/1. The sequence is that of Aspartate--ammonia ligase from Ruminiclostridium cellulolyticum (strain ATCC 35319 / DSM 5812 / JCM 6584 / H10) (Clostridium cellulolyticum).